A 280-amino-acid chain; its full sequence is uncharacterized protein (280 aa).

NADP(+) is bound at residue lysine 3–valine 29. Serine 139 is a substrate binding site. Catalysis depends on tyrosine 152, which acts as the Proton acceptor.

It belongs to the short-chain dehydrogenases/reductases (SDR) family.

This is an uncharacterized protein from Bacillus subtilis (strain 168).